The chain runs to 232 residues: Sugar fermentation stimulation protein homolog (232 aa).

It belongs to the SfsA family.

The protein is Sugar fermentation stimulation protein homolog of Brucella anthropi (strain ATCC 49188 / DSM 6882 / CCUG 24695 / JCM 21032 / LMG 3331 / NBRC 15819 / NCTC 12168 / Alc 37) (Ochrobactrum anthropi).